The following is a 1507-amino-acid chain: Protein TIC 214 (1507 aa).

6 helical membrane-spanning segments follow: residues 4–24 (IYLV…LPIG), 53–73 (TILL…VLAL), 81–101 (LWVK…IYLY), 129–149 (AFLE…NPVF), 163–183 (ISTF…IFFL), and 202–222 (LVKI…SFLC).

This sequence belongs to the TIC214 family. In terms of assembly, part of the Tic complex.

It localises to the plastid. The protein resides in the chloroplast inner membrane. Its function is as follows. Involved in protein precursor import into chloroplasts. May be part of an intermediate translocation complex acting as a protein-conducting channel at the inner envelope. In Staurastrum punctulatum (Green alga), this protein is Protein TIC 214.